A 399-amino-acid chain; its full sequence is MIKKELPDEFGHFGPYGGMFVADTLVHALKQLEHAYTKYRNDQDFLSELHTELKDYVGRPNPLYHAVHLSKKIGGAQIYLKREDLNHTGAHKINNTIGQALLAKRMGKTRVIAETGAGQHGVATATVAAKFGFQCVVYMGSEDIKRQSSNVYRMKLLGAEVVPVTSGSKTLKDALNEALRDWVSHVDDTFYIIGTVAGPHPYPQMVRDFQAIIGVEARAQHMEKTGHLPDALVACVGGGSNAIGLFYPFLNDQSVMIYGVEAGGKGIETGEHSASLIAGKPGVLHGNRTYLLCDEYGQVKDTHSVSAGLDYPGVGPEHAYLKDTGRVIYKAINDSEAMDAFRLLTHTEGIIPALESSHAVAYAIQLAKTMSKEQSIIVNLSGRGDKDMHTVAAIDGITI.

Lysine 92 bears the N6-(pyridoxal phosphate)lysine mark.

The protein belongs to the TrpB family. Tetramer of two alpha and two beta chains. Pyridoxal 5'-phosphate serves as cofactor.

It catalyses the reaction (1S,2R)-1-C-(indol-3-yl)glycerol 3-phosphate + L-serine = D-glyceraldehyde 3-phosphate + L-tryptophan + H2O. The protein operates within amino-acid biosynthesis; L-tryptophan biosynthesis; L-tryptophan from chorismate: step 5/5. Functionally, the beta subunit is responsible for the synthesis of L-tryptophan from indole and L-serine. The protein is Tryptophan synthase beta chain of Legionella pneumophila subsp. pneumophila (strain Philadelphia 1 / ATCC 33152 / DSM 7513).